The following is a 282-amino-acid chain: Elongation factor Ts (282 aa).

Positions 80-83 are involved in Mg(2+) ion dislocation from EF-Tu; that stretch reads TDFV.

The protein belongs to the EF-Ts family.

Its subcellular location is the cytoplasm. Its function is as follows. Associates with the EF-Tu.GDP complex and induces the exchange of GDP to GTP. It remains bound to the aminoacyl-tRNA.EF-Tu.GTP complex up to the GTP hydrolysis stage on the ribosome. This is Elongation factor Ts (tsf) from Chlamydia muridarum (strain MoPn / Nigg).